Here is a 578-residue protein sequence, read N- to C-terminus: Cytochrome P450 monooxygenase fsoE (578 aa).

Residues 28-48 form a helical membrane-spanning segment; it reads LLMAVAITYAISWINWFFTSW. C517 contacts heme.

Belongs to the cytochrome P450 family. Heme is required as a cofactor.

The protein localises to the membrane. It carries out the reaction 3-O-(beta-D-glucopyranosyl)-isomotiol + 2 reduced [NADPH--hemoprotein reductase] + 2 O2 = 2-deacetoxyfuscoatroside + 2 oxidized [NADPH--hemoprotein reductase] + 2 H2O + 3 H(+). It catalyses the reaction 3-O-(beta-D-glucopyranosyl)-2alpha-hydroxyisomotiol + 2 reduced [NADPH--hemoprotein reductase] + 2 O2 = 2-deacetylfuscoatroside + 2 oxidized [NADPH--hemoprotein reductase] + 2 H2O + 3 H(+). The enzyme catalyses 3-O-(beta-D-glucopyranosyl)-2alpha-acetoxyisomotiol + 2 reduced [NADPH--hemoprotein reductase] + 2 O2 = fuscoatroside + 2 oxidized [NADPH--hemoprotein reductase] + 2 H2O + 3 H(+). The catalysed reaction is isomotiol + reduced [NADPH--hemoprotein reductase] + O2 = 19beta-hydroxyisomotiol + oxidized [NADPH--hemoprotein reductase] + H2O + H(+). It carries out the reaction 2alpha-hydroxyisomotiol + reduced [NADPH--hemoprotein reductase] + O2 = 2alpha,19beta-dihydroxyisomotiol + oxidized [NADPH--hemoprotein reductase] + H2O + H(+). It catalyses the reaction 2alpha,19beta-dihydroxyisomotiol + reduced [NADPH--hemoprotein reductase] + O2 = 2alpha-hydroxyismotiol-19-one + oxidized [NADPH--hemoprotein reductase] + 2 H2O + H(+). The enzyme catalyses 2alpha-hydroxyismotiol-19-one + 2 reduced [NADPH--hemoprotein reductase] + O2 = 2-deacetyl,3-deglucopyranosyl-fuscoatroside + 2 oxidized [NADPH--hemoprotein reductase] + H2O + 3 H(+). It participates in secondary metabolite biosynthesis; terpenoid biosynthesis. Functionally, cytochrome P450 monooxygenase; part of the gene cluster that mediates the biosynthesis of the enfumafungin-type antibiotic, fuscoatroside. Within the pathway, fsoE catalyzes the oxidative cleavage of the c19-C20 bond within the E-ring, resulting in the formation of a carboxyl group and a methyl group. FsoE exhibits preferential substrate selectivity toward glycoside substrates over their aglycones. The fuscoatroside biosynthesis is initiated by the cyclization of 2,3(S)-oxidosqualene through FsoA's terpene cyclase (TC) domain, leading to the formation of the fernane skeleton isomotiol, harboring a fernane triterpene skeleton with a C8-C9 double bond. Subsequently, C2-alpha-hydroxylation mediated by fsoD results in the production of 2-alpha-hydroxy-isomotiol, which is further acetylated by fsoF. The glycosyltransferase (GT) domain of FsoA may convert isomotiol, 2-alpha-hydroxy-isomotiol, and the acetylated derivative of 2-alpha-hydroxy-isomotiol into their corresponding glycosides 3-O-(beta-D-glucopyranosyl)-isomotiol, 3-O-(beta-D-glucopyranosyl)-2-alpha-hydroxy-isomotiol, and 3-O-(beta-D-glucopyranosyl)-2-alpha-acetoxy-isomotiol, which then undergo oxidative cleavage under the action of fsoE to form s 2-deacetoxy-fuscoatroside, 2-deacetyl-fuscoatroside, and fuscoatroside, respectively. Although hydroxylation followed by acetylation of 3-O-(beta-D-glucopyranosyl)-isomotiol and 2-deacetoxy-fuscoatroside by fsoD and fsoF could not be ruled out, this process is likely to occur with difficulty due to bulky steric hindrance caused by the presence of a glycan at C3 in these compounds. Interestingly, fsoE can also utilize the aglycones isomotiol and 2-alpha-hydroxy-isomotiol as substrates to generate 19-beta-hydroxy-isomotiol and 2-alpha,19-beta-dihydroxy-isomotiol, respectively. These reactions occur with lower efficiency. Finally, fsoE can further convert 2-alpha,19-beta-dihydroxy-isomotiol into 2-alpha-hydroxy-ismotiol-19-one and 2-alpha-hydroxy-ismotiol-19-one into 2-deacetyl-3-deglucopyranosyl-fuscoatroside. This is Cytochrome P450 monooxygenase fsoE from Humicola fuscoatra.